A 506-amino-acid chain; its full sequence is AMP phosphorylase (506 aa).

AMP-binding positions include Gly167, 193–198 (SRAITG), and Thr202. Catalysis depends on Asp255, which acts as the Proton donor. Positions 263 and 287 each coordinate AMP.

It belongs to the thymidine/pyrimidine-nucleoside phosphorylase family. Type 2 subfamily.

It carries out the reaction AMP + phosphate = alpha-D-ribose 1,5-bisphosphate + adenine. It catalyses the reaction CMP + phosphate = cytosine + alpha-D-ribose 1,5-bisphosphate. The enzyme catalyses UMP + phosphate = alpha-D-ribose 1,5-bisphosphate + uracil. Catalyzes the conversion of AMP and phosphate to adenine and ribose 1,5-bisphosphate (R15P). Exhibits phosphorylase activity toward CMP and UMP in addition to AMP. Functions in an archaeal AMP degradation pathway, together with R15P isomerase and RubisCO. The sequence is that of AMP phosphorylase from Methanosarcina acetivorans (strain ATCC 35395 / DSM 2834 / JCM 12185 / C2A).